Reading from the N-terminus, the 430-residue chain is Asparagine--tRNA ligase (430 aa).

The protein belongs to the class-II aminoacyl-tRNA synthetase family. As to quaternary structure, homodimer.

It localises to the cytoplasm. It catalyses the reaction tRNA(Asn) + L-asparagine + ATP = L-asparaginyl-tRNA(Asn) + AMP + diphosphate + H(+). This Staphylococcus aureus (strain MW2) protein is Asparagine--tRNA ligase.